The sequence spans 168 residues: Peptidoglycan-associated lipoprotein (168 aa).

A signal peptide spans 1–24; it reads MRRIQSIARSPIAIALFMSLAVAG. The N-palmitoyl cysteine moiety is linked to residue C25. The S-diacylglycerol cysteine moiety is linked to residue C25. Residues 51-167 form the OmpA-like domain; the sequence is QDFTVNVGDR…RAVTVLNGAG (117 aa).

It belongs to the Pal lipoprotein family. The Tol-Pal system is composed of five core proteins: the inner membrane proteins TolA, TolQ and TolR, the periplasmic protein TolB and the outer membrane protein Pal. They form a network linking the inner and outer membranes and the peptidoglycan layer. Post-translationally, the N-terminus is blocked.

It is found in the cell outer membrane. In terms of biological role, part of the Tol-Pal system, which plays a role in outer membrane invagination during cell division and is important for maintaining outer membrane integrity. This is Peptidoglycan-associated lipoprotein from Brucella abortus biovar 1 (strain 9-941).